We begin with the raw amino-acid sequence, 396 residues long: ATP-dependent RNA helicase eIF4A (396 aa).

Residues 23–51 (DSFDEMNLKSELLRGIYAYGFERPSAIQQ) carry the Q motif motif. Positions 54–224 (IMPVIKGHDV…TKFMRDPVRI (171 aa)) constitute a Helicase ATP-binding domain. 67-74 (AQSGTGKT) contacts ATP. The DEAD box motif lies at 172-175 (DEAD). The 162-residue stretch at 235 to 396 (GIKQFYIAVE…EMPMNVADLI (162 aa)) folds into the Helicase C-terminal domain.

It belongs to the DEAD box helicase family. eIF4A subfamily. Component of the eIF4F complex, which composition varies with external and internal environmental conditions. It is composed of at least eIF4A, eIF4E and eIF4G.

It is found in the cytoplasm. It carries out the reaction ATP + H2O = ADP + phosphate + H(+). ATP-dependent RNA helicase which is a subunit of the eIF4F complex involved in cap recognition and is required for mRNA binding to ribosome. In the current model of translation initiation, eIF4A unwinds RNA secondary structures in the 5'-UTR of mRNAs which is necessary to allow efficient binding of the small ribosomal subunit, and subsequent scanning for the initiator codon. The polypeptide is ATP-dependent RNA helicase eIF4A (TIF1) (Pyricularia oryzae (strain 70-15 / ATCC MYA-4617 / FGSC 8958) (Rice blast fungus)).